Here is a 418-residue protein sequence, read N- to C-terminus: Probable serine/threonine-protein kinase nek2 (418 aa).

In terms of domain architecture, Protein kinase spans 4–264; the sequence is YEILGALGKG…VNELLGYSFI (261 aa). Residues 10–18 and Lys-33 each bind ATP; that span reads LGKGSFGVV. Residue Asp-135 is the Proton acceptor of the active site. Residues 278 to 363 are a coiled coil; it reads QGLKQMDEDL…SNLSLNCNNS (86 aa).

This sequence belongs to the protein kinase superfamily. NEK Ser/Thr protein kinase family. NIMA subfamily.

The enzyme catalyses L-seryl-[protein] + ATP = O-phospho-L-seryl-[protein] + ADP + H(+). The catalysed reaction is L-threonyl-[protein] + ATP = O-phospho-L-threonyl-[protein] + ADP + H(+). In terms of biological role, involved in centrosome biogenesis. Seems to be required for recruitment of centrosomal material and might be involved in de novo centrosome formation. This Dictyostelium discoideum (Social amoeba) protein is Probable serine/threonine-protein kinase nek2 (nek2).